We begin with the raw amino-acid sequence, 367 residues long: GDSL esterase/lipase At4g28780 (367 aa).

The signal sequence occupies residues 1-28 (MSTFLLTWIIMTVALSVTLFLMPQQTNA). Residue serine 38 is the Nucleophile of the active site. A glycan (N-linked (GlcNAc...) asparagine) is linked at asparagine 119. Residues aspartate 328 and histidine 331 contribute to the active site. N-linked (GlcNAc...) asparagine glycosylation is present at asparagine 356.

Belongs to the 'GDSL' lipolytic enzyme family.

The protein resides in the secreted. This chain is GDSL esterase/lipase At4g28780, found in Arabidopsis thaliana (Mouse-ear cress).